A 440-amino-acid chain; its full sequence is Glutamyl-tRNA reductase (440 aa).

Residues 50–53, serine 109, 114–116, and glutamine 120 each bind substrate; these read TCNR and EPQ. The active-site Nucleophile is cysteine 51. 189-194 contributes to the NADP(+) binding site; sequence GAGEMA.

It belongs to the glutamyl-tRNA reductase family. As to quaternary structure, homodimer.

It carries out the reaction (S)-4-amino-5-oxopentanoate + tRNA(Glu) + NADP(+) = L-glutamyl-tRNA(Glu) + NADPH + H(+). Its pathway is porphyrin-containing compound metabolism; protoporphyrin-IX biosynthesis; 5-aminolevulinate from L-glutamyl-tRNA(Glu): step 1/2. Catalyzes the NADPH-dependent reduction of glutamyl-tRNA(Glu) to glutamate 1-semialdehyde (GSA). This is Glutamyl-tRNA reductase from Nitratidesulfovibrio vulgaris (strain DP4) (Desulfovibrio vulgaris).